A 430-amino-acid polypeptide reads, in one-letter code: Ribosomal protein uS12 methylthiotransferase RimO (430 aa).

In terms of domain architecture, MTTase N-terminal spans 1 to 116 (MRVGIKVLGC…IANALEKGTD (116 aa)). Positions 10, 46, 79, 148, 152, and 155 each coordinate [4Fe-4S] cluster. The 232-residue stretch at 134-365 (LEERPYAYVK…LLQAEISNSR (232 aa)) folds into the Radical SAM core domain. A TRAM domain is found at 367–430 (DRFIGRKLKF…DEYDMWGSVT (64 aa)).

The protein belongs to the methylthiotransferase family. RimO subfamily. The cofactor is [4Fe-4S] cluster.

The protein localises to the cytoplasm. It catalyses the reaction L-aspartate(89)-[ribosomal protein uS12]-hydrogen + (sulfur carrier)-SH + AH2 + 2 S-adenosyl-L-methionine = 3-methylsulfanyl-L-aspartate(89)-[ribosomal protein uS12]-hydrogen + (sulfur carrier)-H + 5'-deoxyadenosine + L-methionine + A + S-adenosyl-L-homocysteine + 2 H(+). In terms of biological role, catalyzes the methylthiolation of an aspartic acid residue of ribosomal protein uS12. The chain is Ribosomal protein uS12 methylthiotransferase RimO from Thermotoga sp. (strain RQ2).